Reading from the N-terminus, the 622-residue chain is Chaperone protein HscA homolog (622 aa).

This sequence belongs to the heat shock protein 70 family.

Chaperone involved in the maturation of iron-sulfur cluster-containing proteins. Has a low intrinsic ATPase activity which is markedly stimulated by HscB. In Burkholderia cenocepacia (strain ATCC BAA-245 / DSM 16553 / LMG 16656 / NCTC 13227 / J2315 / CF5610) (Burkholderia cepacia (strain J2315)), this protein is Chaperone protein HscA homolog.